A 1001-amino-acid chain; its full sequence is MSHLTGTRVSTFNESFLNENEHDSNAVLMELDKGLRSTKQGIQCEAVVRFPRLFEKYPFPILINSSFIKLADYFVSGSNLLRFWVLRVCQQSENHLDKILNIDSFVRCIFVVMHSNDPVARALLLRTLGAVSRVIPEKQQVHHAIRRALDSHDTVEVEAAIYASSCFAAQSSSFAISMCAKISDMIESLQVPVPMKLLLIPVLRHMHHEATTASLVSRLCMDLLPKYPAQSFVVAIIDTLTQLSSRTLVGVPGQLDVLLDFMQDLRTPVRIQVLRSFNELAGRQSVHAWPKPAIKALIDRFELCTNSKEQFLFLSILLKLSECPLTCQQLLREHRVALLRLCIQCISKLDDYTTATQAMAVLSVLVAFGLKKKGSGEQVDDILHMVNLHMEGLLLCTAKRSECTRDLRRVLTYGIRITKANAEFGTSFIGIVTNSLGDKGAYPPANAELMCEALAGLCEHFQLRKYAFSTAEDLIVDENAMDTDELPPPKINPMLARLPLILHKLNTIIDQENCDQQLRSVEILSSLVLQTTMGCYLPQKVVQCFEKCLGRLNCWTLYRIARTASRYGHHYVAAHIYTKVSQIVISDHMHYFLVALSQISQAECILNYGLEYAYMRDNYAPKVAPEPLIPLMKRLEMASNLYQQALASLRAGSSPQHPCTFQLEYLKIRAQFLQTLHLAVTVKNAQVIVPPPAIAGSLAQNSRDYLQKFGHVTNQLRKLVKALKACEETYARLYKSSFDADHVTLEFLEVAEFQCALFAHIIESICYATPPEPPVFLTTGDHPETRYFAASCQRMEQMQKNLPQEPANAKTISNRHLDVIIAQIEIITKTPLCLPRYFFQILQSTQIKLSVSPQPRSATEPVNVQSGSNLVIKVEGVLQHFSKQKKHFRRVESVQLSLTSQLITPPPRSSQELPKQGANDTVTLNQIVKPQRDFLSGSFLLPISNGGHFQVTLETFVVDENGITWCTGPKSSMVVRVLEDPSKQGAPAPSTSQAVGQTRRF.

A disordered region spans residues 980 to 1001 (DPSKQGAPAPSTSQAVGQTRRF). Residues 989-1001 (PSTSQAVGQTRRF) show a composition bias toward polar residues.

This sequence belongs to the Integrator subunit 7 family. As to quaternary structure, belongs to the multiprotein complex Integrator, at least composed of IntS1, IntS2, IntS3, IntS4, omd/IntS5, IntS6, defl/IntS7, IntS8, IntS9, IntS10, IntS11, IntS12, asun/IntS13, IntS14 and IntS15. The core complex associates with protein phosphatase 2A subunits mts/PP2A and Pp2A-29B, to form the Integrator-PP2A (INTAC) complex.

Its subcellular location is the nucleus. It localises to the cytoplasm. Its function is as follows. Component of the integrator complex, a multiprotein complex that terminates RNA polymerase II (Pol II) transcription in the promoter-proximal region of genes. The integrator complex provides a quality checkpoint during transcription elongation by driving premature transcription termination of transcripts that are unfavorably configured for transcriptional elongation: the complex terminates transcription by (1) catalyzing dephosphorylation of the C-terminal domain (CTD) of Pol II subunit Polr2A/Rbp1 and Spt5, and (2) degrading the exiting nascent RNA transcript via endonuclease activity. The integrator complex is also involved in the 3'-end processing of the U7 snRNA, and also the spliceosomal snRNAs U1, U2, U4 and U5. In Drosophila melanogaster (Fruit fly), this protein is Integrator complex subunit 7.